The primary structure comprises 273 residues: MSINPITRNKIKDYLNGFIDQQLAVYSQRNLREFHDVDSYLAAISSDGDLKPFHASIIPSAIMRLNRFERSLSTGLGSTFEECARVIALDHHAVAIRSYDIHTSLDQAVWASIDLLISNIDRNNQRQIPSITEMLEKLQSIALTGIAENHVVRADLYVQRHDGSELFFEIKSPKPNKGQCLEVMQRLLRIYAIKQNSTLPTHAFYAMAYNPWGANRASYTYSIVKKYTDFTNAVVIGQEFWSLIGESSTYTELLEIYREVGLSKSSEITKKLL.

It belongs to the TdeIII type II restriction endonuclease family.

It carries out the reaction Endonucleolytic cleavage of DNA to give specific double-stranded fragments with terminal 5'-phosphates.. Functionally, a P subtype restriction enzyme that recognizes the double-stranded sequence 5'-GGWCC-3' and cleaves after G-1. In Herpetosiphon aurantiacus (Herpetosiphon giganteus), this protein is Type II restriction enzyme HgiCII.